The following is a 221-amino-acid chain: Large ribosomal subunit protein uL4 (221 aa).

The segment at 46–74 (AGTASTKTRSEVSGGGRKPWPQKHTGRAR) is disordered.

This sequence belongs to the universal ribosomal protein uL4 family. Part of the 50S ribosomal subunit.

One of the primary rRNA binding proteins, this protein initially binds near the 5'-end of the 23S rRNA. It is important during the early stages of 50S assembly. It makes multiple contacts with different domains of the 23S rRNA in the assembled 50S subunit and ribosome. Functionally, forms part of the polypeptide exit tunnel. In Petrotoga mobilis (strain DSM 10674 / SJ95), this protein is Large ribosomal subunit protein uL4.